The following is a 392-amino-acid chain: Extracellular metalloproteinase 4 (392 aa).

Residues 1 to 9 (VHSVVDYVS) constitute a propeptide that is removed on maturation. Residues Asn27 and Asn176 are each glycosylated (N-linked (GlcNAc...) asparagine). Position 193 (His193) interacts with Zn(2+). Glu194 is a catalytic residue. A Zn(2+)-binding site is contributed by His197. N-linked (GlcNAc...) asparagine glycosylation is found at Asn359 and Asn385.

Belongs to the peptidase M36 family. Zn(2+) is required as a cofactor.

It localises to the secreted. Its function is as follows. Secreted metalloproteinase probably acting as a virulence factor. This Trichophyton violaceum protein is Extracellular metalloproteinase 4 (MEP4).